Reading from the N-terminus, the 1013-residue chain is MCAQDAFQTQRSQLVELLVSGSLEGFESILDRLLSREVLSWEDYEGLSLVGQPISHLARRLLDTIWNKGTWGCEQLTAAVREAQADSQPPELPSSWDPHSPHPARDLQSHRPAIVRRLYGHVEGVLDLTQQRGFISQYETDEIRRPIFTSSQRARRLLDLATVKANGLAAFLLQCIQELPVPLALPFEDAACKKYVSKLRTVISAQSRFLSTYDGAENLCLEEVYTENVLEIQMEVGMAGPSQQSPTTLGLEELFSTRDHFNKEADTVLVVGEAGSGKSTLLQQLHLLWASGRAFQEFLFVFPFSCRQLQCLVKPLSMRTLLFEHCCWPDLGPQDVFQVLLDHPERILLTFDGFDEFRFRFTDQERHCCPTAPTSVQSLLFNLLQGNLLKNARKVLTSRPSAVSASLRKHVRTELSLKGFSEEGIELYLRKRHREPGVADRLLCLLRATSALHGLCHLPVFSWMVSKCHEELLLQGRGSPKTTTDMYLLILRHFLLHASPLPLATHGLGPSLIQGRLPTLLHLGRLALWGLGTCCYVFSAKQLQAAHVDSEDLSLGFLVLAKRVVPGSTAPLEFLHITFQCFFAAFYLALSADTPPSSLRHLFQDHRPESSPLARVLPKLFLRGSRCREGSVAALLQGAEPHNLQITGAFLAGLLSQEHRSLLAECQASETALLRRWDCVRRCLTRSLREHFRSIPPALPGEAKSMHALPGFLWLIRSLYEMQEERLAREAVCRLNVGHLKLTFCGVGPAECAALAFVLRHLRRPVALQLDHNSVGDIGVEQLLPCLGVCKALYLRDNNISDRGICKLVEHALRCEQLQKLALFNNKLTDGCAHSMARLLACKQNFLALRLGNNHITAAGAEVLAQGLRTNNSLQFLGFWGNQVGDEGAQALAAALGDHQSLRWLSLVGNNIGSVGAQALALMLEKNMALEELCLEENHVQDEGVCFLAKGLARNSSLKVLKLSNNHISSLGAEALLRALEKNDTILEVWLRGNTFSPEEIEKLSHQDTRLLL.

2 consecutive CARD domains span residues methionine 1–serine 95 and histidine 99–alanine 191. The ATG16L1-binding motif signature appears at arginine 36–valine 50. The tract at residues glutamate 82 to aspartate 106 is disordered. Positions 212, 225, 226, 275, 276, 277, 278, 279, and 280 each coordinate ADP. The segment at aspartate 214 to threonine 247 is required for CARD9 binding. Positions aspartate 266–serine 591 constitute an NACHT domain. Glycine 272–serine 279 lines the ATP pocket. Residue cysteine 368 is the site of S-palmitoyl cysteine attachment. ADP is bound at residue histidine 576. 9 LRR repeats span residues arginine 764–proline 785, valine 789–valine 809, glutamine 817–arginine 838, asparagine 845–glutamine 866, serine 873–alanine 893, serine 901–leucine 922, alanine 929–alanine 949, serine 957–arginine 978, and threonine 985–aspartate 1008.

Belongs to the NOD1-NOD2 family. In terms of assembly, homooligomer: homooligomerizes following muramyl dipeptide (MDP)-binding, promoting RIPK2 recruitment. Interacts (via CARD domain) with RIPK2 (via CARD domain). Following RIPK2 recruitment, RIPK2 homooligomerizes via its CARD domain and forms long filaments named RIPosomes. Interacts (via CARD domain) with ubiquitin; inhibiting interaction with RIPK2. Component of a signaling complex consisting of ARHGEF2, NOD2 and RIPK2. Interacts with ANKRD17 (via N-terminus). Interacts with HSPA1A; the interaction enhances NOD2 stability. Interacts (via both CARD domains) with HSP90; the interaction enhances NOD2 stability. Interacts (via CARD domain) with SOCS3; the interaction promotes NOD2 degradation. Interacts (via CARD domain) with ERBIN; the interaction inhibits activation of NOD2. Interacts with MAPKBP1; the interaction is enhanced in the presence of muramyl dipeptide (MDP) and inhibits NOD2 homooligomerization and activation. Interacts with INAVA; the interaction takes place upon Pattern recognition receptor (PRR) stimulation. Interacts (via NACHT domain) with CARD9. Interacts (via CARD domain) with CASP1; this interaction leads to IL1B processing. Also interacts with CASP4. Interacts with NLRP1; this interaction is enhanced in the presence of muramyl dipeptide (MDP) and leads to increased IL1B release. Interacts with NLRP12; this interaction promotes degradation of NOD2 through the ubiquitin-proteasome pathway. Interacts with ANKHD1, C10orf67, CHMP5, DOCK7, ENTR1, KRT15, LDOC1, PPP1R12C, PPP2R3B, TRIM41 and VIM. Interacts with MAVS; interaction takes place following single-stranded RNA (ssRNA)-binding. Interacts with ATG16L1. Interacts with IRGM; promoting IRGM 'Lys-63'-linked polyubiquitination, which is required for interactions with the core autophagy factors. Palmitoylated by ZDHHC5; palmitoylation is required for proper recruitment to the bacterial entry site and hence for proper signaling upon cognate peptidoglycan detection. Palmitoylation promotes localization to the cell membrane. Palmitoylation protects from SQSTM1/p62-dependent autophagic degradation. In terms of processing, polyubiquitinated by TRIM27, leading to proteasome-mediated degradation. Polyubiquitinated and degraded following muramyl dipeptide (MDP) stimulation, conferring MDP tolerance and preventing septic shock. Post-translationally, degraded via selective autophagy following interaction with IRGM. IRGM promotes NOD2-RIPK2 RIPosome recruitment to autophagosome membranes, promoting their SQSTM1/p62-dependent autophagic degradation. O-glycosylated by OGT, O-GlcNAcylation increases protein stability.

It localises to the cell membrane. It is found in the basolateral cell membrane. Its subcellular location is the cytoplasm. The protein resides in the mitochondrion. Its activity is regulated as follows. ADP-binding promotes an inactive closed conformation. Its function is as follows. Pattern recognition receptor (PRR) that detects bacterial peptidoglycan fragments and other danger signals and plays an important role in gastrointestinal immunity. Specifically activated by muramyl dipeptide (MDP), a fragment of bacterial peptidoglycan found in every bacterial peptidoglycan type. NOD2 specifically recognizes and binds 6-O-phospho-MDP, the phosphorylated form of MDP, which is generated by NAGK. 6-O-phospho-MDP-binding triggers oligomerization that facilitates the binding and subsequent activation of the proximal adapter receptor-interacting RIPK2. Following recruitment, RIPK2 undergoes 'Met-1'- (linear) and 'Lys-63'-linked polyubiquitination by E3 ubiquitin-protein ligases XIAP, BIRC2, BIRC3 and the LUBAC complex, becoming a scaffolding protein for downstream effectors, triggering activation of the NF-kappa-B and MAP kinases signaling. This in turn leads to the transcriptional activation of hundreds of genes involved in immune response. Its ability to detect bacterial MDP plays a central role in maintaining the equilibrium between intestinal microbiota and host immune responses to control inflammation. An imbalance in this relationship results in dysbiosis, whereby pathogenic bacteria prevail on commensals, causing damage in the intestinal epithelial barrier as well as allowing bacterial invasion and inflammation. Acts as a regulator of appetite by sensing MDP in a subset of brain neurons: microbiota-derived MDP reach the brain, where they bind and activate NOD2 in inhibitory hypothalamic neurons, decreasing neuronal activity, thereby regulating satiety and body temperature. NOD2-dependent MDP-sensing of bacterial cell walls in the intestinal epithelial compartment contributes to sustained postnatal growth upon undernutrition. Also plays a role in antiviral response by acting as a sensor of single-stranded RNA (ssRNA) from viruses: upon ssRNA-binding, interacts with MAVS, leading to activation of interferon regulatory factor-3/IRF3 and expression of type I interferon. Also acts as a regulator of autophagy in dendritic cells via its interaction with ATG16L1, possibly by recruiting ATG16L1 at the site of bacterial entry. NOD2 activation in the small intestine crypt also contributes to intestinal stem cells survival and function: acts by promoting mitophagy via its association with ATG16L1. In addition to its main role in innate immunity, also regulates the adaptive immune system by acting as regulator of helper T-cell and regulatory T-cells (Tregs). Besides recognizing pathogens, also involved in the endoplasmic reticulum stress response: acts by sensing and binding to the cytosolic metabolite sphingosine-1-phosphate generated in response to endoplasmic reticulum stress, initiating an inflammation process that leads to activation of the NF-kappa-B and MAP kinases signaling. May also be involved in NLRP1 activation following activation by MDP, leading to CASP1 activation and IL1B release in macrophages. This chain is Nucleotide-binding oligomerization domain-containing protein 2 (NOD2), found in Bos taurus (Bovine).